A 185-amino-acid polypeptide reads, in one-letter code: Potassium-transporting ATPase KdpC subunit (185 aa).

The chain crosses the membrane as a helical span at residues 14 to 34 (ALSLLTGVAYPLALTGIAAVI). Positions 105–128 (AQNGAPAPVDAVTASGSGLDPHVS) are disordered.

This sequence belongs to the KdpC family. As to quaternary structure, the system is composed of three essential subunits: KdpA, KdpB and KdpC.

The protein resides in the cell inner membrane. In terms of biological role, part of the high-affinity ATP-driven potassium transport (or Kdp) system, which catalyzes the hydrolysis of ATP coupled with the electrogenic transport of potassium into the cytoplasm. This subunit acts as a catalytic chaperone that increases the ATP-binding affinity of the ATP-hydrolyzing subunit KdpB by the formation of a transient KdpB/KdpC/ATP ternary complex. This Cereibacter sphaeroides (strain ATCC 17029 / ATH 2.4.9) (Rhodobacter sphaeroides) protein is Potassium-transporting ATPase KdpC subunit.